The following is a 232-amino-acid chain: QIKDLLVSSSTDLDTTLVLVNAIYFKGMWKTAFNAEDTREMPFHVTKQESKPVQMMCMNNSFNVATLPAEKMKILELPFASGDLSMLVLLPDEVSDLERIEKTINFEKLTEWTNPNTMEKRRVKVYLPQMKIEEKYNLTSVLMALGMTDLFIPSANLTGISSAESLKISQAVHGAFMELSEDGIEMAGSTGVIEDIKHSPESEQFRADHPFLFLIKHNPTNTIVYFGRYWSP.

The protein belongs to the serpin family. Ov-serpin subfamily. As to expression, expressed in egg white (at protein level).

The sequence is that of Ovalbumin-related protein X (SERPINB14C) from Gallus gallus (Chicken).